The sequence spans 1342 residues: DNA-directed RNA polymerase subunit beta (1342 aa).

Belongs to the RNA polymerase beta chain family. As to quaternary structure, the RNAP catalytic core consists of 2 alpha, 1 beta, 1 beta' and 1 omega subunit. When a sigma factor is associated with the core the holoenzyme is formed, which can initiate transcription.

It carries out the reaction RNA(n) + a ribonucleoside 5'-triphosphate = RNA(n+1) + diphosphate. Functionally, DNA-dependent RNA polymerase catalyzes the transcription of DNA into RNA using the four ribonucleoside triphosphates as substrates. The protein is DNA-directed RNA polymerase subunit beta of Klebsiella pneumoniae subsp. pneumoniae (strain ATCC 700721 / MGH 78578).